The sequence spans 149 residues: Peptide deformylase (149 aa).

Residues C92 and H134 each contribute to the Fe cation site. Residue E135 is part of the active site. H138 contributes to the Fe cation binding site.

The protein belongs to the polypeptide deformylase family. Fe(2+) is required as a cofactor.

The enzyme catalyses N-terminal N-formyl-L-methionyl-[peptide] + H2O = N-terminal L-methionyl-[peptide] + formate. Its function is as follows. Removes the formyl group from the N-terminal Met of newly synthesized proteins. Requires at least a dipeptide for an efficient rate of reaction. N-terminal L-methionine is a prerequisite for activity but the enzyme has broad specificity at other positions. The chain is Peptide deformylase from Buchnera aphidicola subsp. Cinara cedri (strain Cc).